Consider the following 544-residue polypeptide: Chaperonin GroEL (544 aa).

Residues threonine 29 to proline 32, lysine 50, aspartate 86 to threonine 90, glycine 413, aspartate 479 to alanine 481, and aspartate 495 contribute to the ATP site.

It belongs to the chaperonin (HSP60) family. Forms a cylinder of 14 subunits composed of two heptameric rings stacked back-to-back. Interacts with the co-chaperonin GroES.

It is found in the cytoplasm. The enzyme catalyses ATP + H2O + a folded polypeptide = ADP + phosphate + an unfolded polypeptide.. In terms of biological role, together with its co-chaperonin GroES, plays an essential role in assisting protein folding. The GroEL-GroES system forms a nano-cage that allows encapsulation of the non-native substrate proteins and provides a physical environment optimized to promote and accelerate protein folding. The sequence is that of Chaperonin GroEL from Borrelia duttonii (strain Ly).